We begin with the raw amino-acid sequence, 562 residues long: MSHAKEDYDSSYDPYSYQADYDGHTGDPKQDLAYERQYEQQTYQVIPEVIKNFIQYFHKTVSDLIDQKVYELQASRVSSDLIDQKVYEIQDIYENSWAKLTERFFKNAPWPEAEAIAPQVGNDAVFLILYKELYYRHIYAKVTGGPTLEQRFESYYNYCNLFNYILNADGPAPLELPNQWLWDIIDEFIYQFQSFSQYRCKTAKKSEEEIEFLRSNPKIWNVHSVLNVLHSLVDKSNINRQLEVYTSGGDPESVAGEYGRHSLYKMLGYFSLVGLLRLHSLLGDYYQAIKVLENIELNKKSMYSRVPECQVTTYYYVGFAYLMMRRYQDSIRVFANILLYIQRTKSMFQRTTYKYEMINKQNEQMHALLSIALTMYPMRIDESIHTQLREKYGDKMLRMQKGDAQIYEELFNYACPKFLSPVVPNYDNVNPNYHKEPYLQQLKVFLDEVQQQAQLSTIRSFLKLYTTMPVAKLAGFLDLPEQEFRIQLLVFKHKMKNLVWTSGISALEGEFQSASEVDFYIDKDMIHIADTKVARRYGDFFIRQIHKFEELNKTLKKMSQKP.

The tract at residues 1–29 (MSHAKEDYDSSYDPYSYQADYDGHTGDPK) is disordered. Over residues 11–20 (SYDPYSYQAD) the composition is skewed to low complexity. Residues 329-535 (DSIRVFANIL…IHIADTKVAR (207 aa)) form the PCI domain.

Belongs to the eIF-3 subunit L family. As to quaternary structure, component of the eukaryotic translation initiation factor 3 (eIF-3) complex, which is composed of 13 subunits: eif3a, eif3b, eif3c, eif3d, eif3e, eif3f, eif3g, eif3h, eif3i, eif3j, eif3k, eif3l and eif3m.

It is found in the cytoplasm. Functionally, component of the eukaryotic translation initiation factor 3 (eIF-3) complex, which is involved in protein synthesis of a specialized repertoire of mRNAs and, together with other initiation factors, stimulates binding of mRNA and methionyl-tRNAi to the 40S ribosome. The eIF-3 complex specifically targets and initiates translation of a subset of mRNAs involved in cell proliferation. This chain is Eukaryotic translation initiation factor 3 subunit L (eif3l), found in Xenopus laevis (African clawed frog).